An 82-amino-acid chain; its full sequence is Delta-ctenitoxin-Pn2a (82 aa).

Residues 1 to 17 (MKVAILFLSILVLAVAS) form the signal peptide. The propeptide occupies 18–34 (ESIEESRDDFAVEELGR). 5 cysteine pairs are disulfide-bonded: Cys37-Cys51, Cys44-Cys57, Cys48-Cys80, Cys50-Cys65, and Cys59-Cys63.

This sequence belongs to the neurotoxin 03 (Tx2) family. 06 subfamily. Expressed by the venom gland.

It localises to the secreted. Functionally, toxin that is known to potentiate erectile function. It binds voltage-dependently to sodium channels (Nav), inhibits the inactivation of the activated channels and decreases the peak inward current. The toxin delays inactivation of Nav1.2/SCN2A, Nav1.3/SCN3A, Nav1.4/SCN4A and Nav1.8/SCN10A, slows the inactivation process and decreases the sodium peak amplitude of Nav1.5/SCN5A and Nav1.6/SCN8A. In vivo, it enhances erectile function by inducing the release of nictric oxide (NO): it slows the sodium current, leading to depolarization, which leads to an increase in calcium influx (probably via activation of N-type calcium channels) which in turn activates neuronal NO synthase (nNOS/NOS1), inducing nitric oxide (NO) production. In a final step, NO activates soluble guanylate cyclase (GUCY1A1/GUCY1B1) which in turn increases cGMP formation, resulting in penile erection. It is noteworthy that the toxin does not provoke erection by inhibiting phosphodiesterase type 5 (PDE5A), an enzyme that hydrolysis cGMP. In vivo, it also causes scratching, lacrimation, hypersalivation, sweating and agitation followed by spastic paralysis of the anterior and posterior extremities and death at dose levels of 0.79 mg/mouse. It is insecticidal to the larval and adult forms of the house fly. The toxin also improves cavernosal relaxation in different models where erectile dysfunction is observed, such as deoxycorticosterone-acetate (DOCA)-salt hypertensive rats, mice models for type-1 diabetes, as well as elderly rats. The chain is Delta-ctenitoxin-Pn2a from Phoneutria nigriventer (Brazilian armed spider).